We begin with the raw amino-acid sequence, 35 residues long: Protein YbgU (35 aa).

This is Protein YbgU from Escherichia coli (strain K12).